A 256-amino-acid polypeptide reads, in one-letter code: Cell division protein DivIB (256 aa).

Residues 1–23 (MSKDLISTDEYIKIKKKRKRIKK) lie on the Cytoplasmic side of the membrane. The chain crosses the membrane as a helical span at residues 24 to 44 (IVVLFIFLISILVTLCLKIPY). A POTRA domain is found at 45–113 (FNIESIEIKG…NKLEIYVKER (69 aa)). Over 45 to 256 (FNIESIEIKG…EGNPVFYIEK (212 aa)) the chain is Extracellular.

The protein belongs to the FtsQ/DivIB family. DivIB subfamily.

Its subcellular location is the cell membrane. Its function is as follows. Cell division protein that may be involved in stabilizing or promoting the assembly of the division complex. The protein is Cell division protein DivIB of Clostridium botulinum (strain Loch Maree / Type A3).